The chain runs to 100 residues: Probable antitoxin MazE1 (100 aa).

The tract at residues 77–100 (PYESEAERSAARARRNARQQRSAQ) is disordered.

As to quaternary structure, forms a complex with cognate toxin MazF1.

Probable antitoxin component of a type II toxin-antitoxin (TA) system. Labile antitoxin that binds to cognate MazF1 toxin and counteracts its endoribonuclease activity. The chain is Probable antitoxin MazE1 (mazE1) from Mycobacterium bovis (strain ATCC BAA-935 / AF2122/97).